The chain runs to 389 residues: Aspartic protease pepA (389 aa).

The signal sequence occupies residues 1–20 (MVLINQLGAVLAVCATLTVA). A propeptide spans 21 to 67 (APTKGKARFNVPQVAIPKKMVHHPAVSYARALHKFGMKVPKTVQDAA) (activation peptide). The Peptidase A1 domain maps to 82–386 (YVTQVTVGEG…DTQGPRIGFA (305 aa)). Residue aspartate 98 is part of the active site. Asparagine 257 carries an N-linked (GlcNAc...) asparagine glycan. The active site involves aspartate 279. Cysteines 315 and 348 form a disulfide.

This sequence belongs to the peptidase A1 family. In terms of assembly, monomer.

The protein localises to the secreted. Its function is as follows. Secreted aspartic endopeptidase that allows assimilation of proteinaceous substrates. The scissile peptide bond is attacked by a nucleophilic water molecule activated by two aspartic residues in the active site. Shows a broad primary substrate specificity. Favors hydrophobic residues at the P1 and P1' positions. This chain is Aspartic protease pepA, found in Arthroderma otae (strain ATCC MYA-4605 / CBS 113480) (Microsporum canis).